We begin with the raw amino-acid sequence, 138 residues long: MLWKKTFTLENLNQLCSNSAVSHLGIEISAFGEDWIEATMPVDHRTMQPFGVLHGGVSVALAETIGSLAGSLCLEEGKTVVGLDINANHLRPVRSGKVTARATPINLGRNIQVWQIDIRTEENKLCCVSRLTLSVINL.

The protein belongs to the thioesterase PaaI family.

The polypeptide is Putative esterase HI_1161 (Haemophilus influenzae (strain ATCC 51907 / DSM 11121 / KW20 / Rd)).